A 930-amino-acid polypeptide reads, in one-letter code: Isoleucine--tRNA ligase (930 aa).

The 'HIGH' region signature appears at 57–67; it reads PYANGNIHVGH. Glu554 is an L-isoleucyl-5'-AMP binding site. Positions 595–599 match the 'KMSKS' region motif; sequence KMSKS. Residue Lys598 coordinates ATP. Zn(2+) is bound by residues Cys888, Cys891, Cys908, and Cys911.

Belongs to the class-I aminoacyl-tRNA synthetase family. IleS type 1 subfamily. In terms of assembly, monomer. The cofactor is Zn(2+).

It localises to the cytoplasm. It catalyses the reaction tRNA(Ile) + L-isoleucine + ATP = L-isoleucyl-tRNA(Ile) + AMP + diphosphate. Functionally, catalyzes the attachment of isoleucine to tRNA(Ile). As IleRS can inadvertently accommodate and process structurally similar amino acids such as valine, to avoid such errors it has two additional distinct tRNA(Ile)-dependent editing activities. One activity is designated as 'pretransfer' editing and involves the hydrolysis of activated Val-AMP. The other activity is designated 'posttransfer' editing and involves deacylation of mischarged Val-tRNA(Ile). This Streptococcus pneumoniae (strain ATCC BAA-255 / R6) protein is Isoleucine--tRNA ligase.